A 154-amino-acid polypeptide reads, in one-letter code: SsrA-binding protein (154 aa).

It belongs to the SmpB family.

It localises to the cytoplasm. Its function is as follows. Required for rescue of stalled ribosomes mediated by trans-translation. Binds to transfer-messenger RNA (tmRNA), required for stable association of tmRNA with ribosomes. tmRNA and SmpB together mimic tRNA shape, replacing the anticodon stem-loop with SmpB. tmRNA is encoded by the ssrA gene; the 2 termini fold to resemble tRNA(Ala) and it encodes a 'tag peptide', a short internal open reading frame. During trans-translation Ala-aminoacylated tmRNA acts like a tRNA, entering the A-site of stalled ribosomes, displacing the stalled mRNA. The ribosome then switches to translate the ORF on the tmRNA; the nascent peptide is terminated with the 'tag peptide' encoded by the tmRNA and targeted for degradation. The ribosome is freed to recommence translation, which seems to be the essential function of trans-translation. This Synechocystis sp. (strain ATCC 27184 / PCC 6803 / Kazusa) protein is SsrA-binding protein.